A 434-amino-acid chain; its full sequence is F-box/LRR-repeat protein 21 (434 aa).

The region spanning 39-85 (LLDWGNLPHHVVLRIFQYLPLIDRARASSVCRRWNEVFHIPDLWRKF) is the F-box domain. LRR repeat units lie at residues 187 to 213 (DTPVDDPSLSILVANNSGTLRRLKMSS), 214 to 239 (CPHVSSNGILCVADHCQGLRELALNY), 242 to 265 (LSDKLLLALSNETHVNLEHLRIDV), 322 to 347 (GRSVSKEILGRLGLNCPRLTELVVCA), 349 to 374 (GIQVIDTELICIAEHCKNLTALGLSE), and 375 to 400 (CEVSCSAFIEFVRLCGRKLTHLSIME).

As to quaternary structure, part of the SCF (SKP1-CUL1-F-box) E3 ubiquitin-protein ligase complex SCF(FBXL21) composed of CUL1, SKP1, RBX1 and FBXL21. Interacts with CRY1 and CRY2.

It localises to the cytoplasm. The protein resides in the cytosol. Its subcellular location is the nucleus. Its pathway is protein modification; protein ubiquitination. Its function is as follows. Substrate-recognition component of the SCF(FBXL21) E3 ubiquitin ligase complex involved in circadian rhythm function. Plays a key role in the maintenance of both the speed and the robustness of the circadian clock oscillation. The SCF(FBXL21) complex mainly acts in the cytosol and mediates ubiquitination of CRY proteins (CRY1 and CRY2), leading to CRY proteins stabilization. The SCF(FBXL21) complex counteracts the activity of the SCF(FBXL3) complex and protects CRY proteins from degradation. Involved in the hypothalamic suprachiasmatic nucleus (SCN) clock regulating temporal organization of the daily activities. This chain is F-box/LRR-repeat protein 21 (FBXL21), found in Bos taurus (Bovine).